The primary structure comprises 433 residues: uncharacterized protein (433 aa).

The next 11 helical transmembrane spans lie at 28-48, 56-76, 102-122, 126-146, 164-184, 207-227, 250-270, 304-324, 345-365, 375-395, and 406-426; these read FAALGPGILMASAAVGGSHII, IYGWQLAIIIILANLFKYPFF, IWIFFLLNVFATVINTAAVGL, AILTFVLPVQVPVPTLSFIVI, LSKLIMIALTITTVSAVIIAL, ALGFIVALMGWMPAPIEISAI, FNVGYIGTAILALVFLALGAL, GLIAFIAFMCMFGTTITVIDG, SYLNVAITFAALAGLAIIFYF, FAMIASFVSTPVFAYLNLSLV, and LLWLSLIGLMYLTSFTLLFIA.

The protein localises to the cell membrane. This is an uncharacterized protein from Pasteurella multocida (strain Pm70).